Consider the following 222-residue polypeptide: Inositol diphosphatase DSP1 (222 aa).

Residues 1–14 (MRQEATCSLVLTQD) are compositionally biased toward polar residues. The interval 1-41 (MRQEATCSLVLTQDAQHRKNQPPLAEEDDDRDHTDDAMPPP) is disordered. One can recognise a Tyrosine-protein phosphatase domain in the interval 68-222 (NFAMVDHGVY…LKHLPASFSC (155 aa)). Residues 124 to 136 (FGIDGSKEPFVNI) form a WPD loop important for active site topology region. N135, I136, and R140 together coordinate 1D-myo-inositol hexakisphosphate. C160 functions as the Phosphocysteine intermediate in the catalytic mechanism.

Belongs to the protein-tyrosine phosphatase family. Atypical dual-specificity phosphatase Siw14-like subfamily.

It is found in the nucleus. It localises to the cytoplasm. The enzyme catalyses 5-diphospho-1D-myo-inositol 1,2,3,4,6-pentakisphosphate + H2O = 1D-myo-inositol hexakisphosphate + phosphate + H(+). It catalyses the reaction 1,5-bis(diphospho)-1D-myo-inositol 2,3,4,6-tetrakisphosphate + H2O = 1-diphospho-1D-myo-inositol 2,3,4,5,6-pentakisphosphate + phosphate + 2 H(+). The catalysed reaction is 3,5-bis(diphospho)-1D-myo-inositol 1,2,4,6-tetrakisphosphate + H2O = 3-diphospho-1D-myo-inositol 1,2,4,5,6-pentakisphosphate + phosphate + 2 H(+). It carries out the reaction 6-diphospho-1D-myo-inositol pentakisphosphate + H2O = 1D-myo-inositol hexakisphosphate + phosphate + H(+). Its function is as follows. Cleaves the beta-phosphate at the 5-position of soluble inositol pyrophosphates. Has highest activity on 5-diphosphoinositol 1,2,3,4,6-pentakisphosphate (5-InsP(7)). Possesses phosphotyrosine phosphatase activity in vitro. May contribute to regulation of drought stress responses. The chain is Inositol diphosphatase DSP1 from Oryza sativa subsp. japonica (Rice).